The sequence spans 212 residues: Uridine kinase (212 aa).

13-20 (GGSGSGKT) contributes to the ATP binding site.

Belongs to the uridine kinase family.

The protein localises to the cytoplasm. The enzyme catalyses uridine + ATP = UMP + ADP + H(+). The catalysed reaction is cytidine + ATP = CMP + ADP + H(+). Its pathway is pyrimidine metabolism; CTP biosynthesis via salvage pathway; CTP from cytidine: step 1/3. It participates in pyrimidine metabolism; UMP biosynthesis via salvage pathway; UMP from uridine: step 1/1. In Bacillus cereus (strain ATCC 10987 / NRS 248), this protein is Uridine kinase.